Reading from the N-terminus, the 554-residue chain is Arginine--tRNA ligase (554 aa).

A 'HIGH' region motif is present at residues 130–140; that stretch reads ANPTGDLHIGH.

The protein belongs to the class-I aminoacyl-tRNA synthetase family. As to quaternary structure, monomer.

The protein resides in the cytoplasm. The enzyme catalyses tRNA(Arg) + L-arginine + ATP = L-arginyl-tRNA(Arg) + AMP + diphosphate. This is Arginine--tRNA ligase from Staphylococcus carnosus (strain TM300).